Consider the following 581-residue polypeptide: Putative ABC transporter ATP-binding protein MM_1996 (581 aa).

The ABC transporter 1 domain occupies 10–250 (IEIRDLWYTY…LEVFHRLGLR (241 aa)). Position 44–51 (44–51 (GPTGCGKS)) interacts with ATP. The tract at residues 287–309 (GDYPASPGRKEKTSSPGWSSENN) is disordered. Residues 300-309 (SSPGWSSENN) show a composition bias toward polar residues. Positions 313–541 (VSVRDLWSGY…IDILRKASLT (229 aa)) constitute an ABC transporter 2 domain. 346–353 (GTNGSGKS) is a binding site for ATP.

Belongs to the ABC transporter superfamily.

It localises to the cell membrane. In terms of biological role, probably part of an ABC transporter complex. Responsible for energy coupling to the transport system. The chain is Putative ABC transporter ATP-binding protein MM_1996 from Methanosarcina mazei (strain ATCC BAA-159 / DSM 3647 / Goe1 / Go1 / JCM 11833 / OCM 88) (Methanosarcina frisia).